The primary structure comprises 205 residues: ATP synthase subunit b (205 aa).

The first 27 residues, 1–27 (MKLNKKHLVAILSVLSLSIIVVPLLTS), serve as a signal peptide directing secretion. Cys28 is lipidated: N-palmitoyl cysteine. Cys28 is lipidated: S-diacylglycerol cysteine. A helical membrane pass occupies residues 48 to 68 (VWVFIAQVIAMCVVFSLVLWL).

Belongs to the ATPase B chain family. In terms of assembly, F-type ATPases have 2 components, F(1) - the catalytic core - and F(0) - the membrane proton channel. F(1) has five subunits: alpha(3), beta(3), gamma(1), delta(1), epsilon(1). F(0) has three main subunits: a(1), b(2) and c(10-14). The alpha and beta chains form an alternating ring which encloses part of the gamma chain. F(1) is attached to F(0) by a central stalk formed by the gamma and epsilon chains, while a peripheral stalk is formed by the delta and b chains.

It localises to the cell membrane. F(1)F(0) ATP synthase produces ATP from ADP in the presence of a proton or sodium gradient. F-type ATPases consist of two structural domains, F(1) containing the extramembraneous catalytic core and F(0) containing the membrane proton channel, linked together by a central stalk and a peripheral stalk. During catalysis, ATP synthesis in the catalytic domain of F(1) is coupled via a rotary mechanism of the central stalk subunits to proton translocation. In terms of biological role, component of the F(0) channel, it forms part of the peripheral stalk, linking F(1) to F(0). The protein is ATP synthase subunit b of Ureaplasma parvum serovar 3 (strain ATCC 27815 / 27 / NCTC 11736).